We begin with the raw amino-acid sequence, 495 residues long: Cytochrome P450 2B15 (495 aa).

Phosphoserine; by PKA is present on Ser129. Cys437 contributes to the heme binding site.

Belongs to the cytochrome P450 family. The cofactor is heme.

Its subcellular location is the endoplasmic reticulum membrane. It is found in the microsome membrane. It carries out the reaction an organic molecule + reduced [NADPH--hemoprotein reductase] + O2 = an alcohol + oxidized [NADPH--hemoprotein reductase] + H2O + H(+). Functionally, cytochromes P450 are a group of heme-thiolate monooxygenases. In liver microsomes, this enzyme is involved in an NADPH-dependent electron transport pathway. It oxidizes a variety of structurally unrelated compounds, including steroids, fatty acids, and xenobiotics. The protein is Cytochrome P450 2B15 (Cyp2b15) of Rattus norvegicus (Rat).